A 586-amino-acid chain; its full sequence is Aspartate--tRNA ligase (586 aa).

Glu171 contacts L-aspartate. The interval Gln195–Lys198 is aspartate. Residue Arg217 participates in L-aspartate binding. ATP is bound by residues Arg217–Glu219 and Gln226. His448 is a binding site for L-aspartate. Residue Glu482 participates in ATP binding. Position 489 (Arg489) interacts with L-aspartate. Position 534 to 537 (Gly534 to Arg537) interacts with ATP.

This sequence belongs to the class-II aminoacyl-tRNA synthetase family. Type 1 subfamily. As to quaternary structure, homodimer.

It is found in the cytoplasm. The catalysed reaction is tRNA(Asp) + L-aspartate + ATP = L-aspartyl-tRNA(Asp) + AMP + diphosphate. In terms of biological role, catalyzes the attachment of L-aspartate to tRNA(Asp) in a two-step reaction: L-aspartate is first activated by ATP to form Asp-AMP and then transferred to the acceptor end of tRNA(Asp). In Buchnera aphidicola subsp. Acyrthosiphon pisum (strain 5A), this protein is Aspartate--tRNA ligase.